The following is a 303-amino-acid chain: Cyclin-dependent kinase B1-1 (303 aa).

Residues tyrosine 4–phenylalanine 295 enclose the Protein kinase domain. ATP is bound by residues valine 10–valine 18 and lysine 33. Phosphothreonine is present on threonine 14. Tyrosine 15 carries the phosphotyrosine modification. Aspartate 136 acts as the Proton acceptor in catalysis. A Phosphothreonine modification is found at threonine 170.

The protein belongs to the protein kinase superfamily. CMGC Ser/Thr protein kinase family. CDC2/CDKX subfamily. Expressed in actively dividing cells: root and shoot apical meristems, and young leaves.

It catalyses the reaction L-seryl-[protein] + ATP = O-phospho-L-seryl-[protein] + ADP + H(+). It carries out the reaction L-threonyl-[protein] + ATP = O-phospho-L-threonyl-[protein] + ADP + H(+). The enzyme catalyses [DNA-directed RNA polymerase] + ATP = phospho-[DNA-directed RNA polymerase] + ADP + H(+). In Oryza sativa subsp. japonica (Rice), this protein is Cyclin-dependent kinase B1-1 (CDKB1-1).